A 255-amino-acid polypeptide reads, in one-letter code: Phosphate import ATP-binding protein PstB (255 aa).

One can recognise an ABC transporter domain in the interval 8–250 (IKSSNLNVHY…PGNKMTQDYI (243 aa)). 40 to 47 (GPSGCGKS) is a binding site for ATP.

The protein belongs to the ABC transporter superfamily. Phosphate importer (TC 3.A.1.7) family. As to quaternary structure, the complex is composed of two ATP-binding proteins (PstB), two transmembrane proteins (PstC and PstA) and a solute-binding protein (PstS).

It localises to the cell inner membrane. It carries out the reaction phosphate(out) + ATP + H2O = ADP + 2 phosphate(in) + H(+). Functionally, part of the ABC transporter complex PstSACB involved in phosphate import. Responsible for energy coupling to the transport system. In Pelagibacter ubique (strain HTCC1062), this protein is Phosphate import ATP-binding protein PstB.